The sequence spans 596 residues: MSESCANPLLLEWIKEWLDQARERNSKGVTVYKKAYESMKACPLVFQHPSEAQQLNGLGPKLCERLTEKLKAYCEENGLPMPEHPQKAAASKRTSDEGVDDPPAKKPRKAKPYVPSLRSGPYALLLGLATLDENASQGLTKAQLIEKAQPYCDSSFTAPPDPSKFYTAWNSMKTLLQKELVYEHGRPLRRYALTEEGWEVAKRIKKTLPGGDLNTLAFRHQTGILSIEQGDSSTHVRSNTSTSAAPGPRDNDNNIVAQESLNGNNDEPIQIQDNDRGRDPIDEIGIEPIILPANSFTIQLVLDTREVRSSKDRDYIANELSKKGITPEVRALELGDAMWVARCNDPTFLSQYGEECNEVMLDWIVERKRMDDLLGSIKDGRFHEQKFRLRRSGIKNVIYLIEEFAITHDVGSASAMKYQEMMASAIASTQVVNGYFVKQTRNLDDTIRYLARMTYLLQKMYCFSPPTHTLSLIPSRQLSSAQSYLTTLERLRARDPSVTYSVTFSTFSALTSKSDILSLRDVFLKMLMCTRGVTGEKALAIQKRWSTPREFVEAFERLDEKGREDMVFERTKTLVGRKKMGKVLSKKIADIWGTGG.

Disordered stretches follow at residues 77–113 (NGLPMPEHPQKAAASKRTSDEGVDDPPAKKPRKAKPY) and 228–278 (EQGD…DRGR). Composition is skewed to polar residues over residues 229–244 (QGDSSTHVRSNTSTSA) and 253–267 (NNIVAQESLNGNNDE). Positions 299-405 (QLVLDTREVR…NVIYLIEEFA (107 aa)) constitute an ERCC4 domain.

The protein belongs to the XPF family. As to quaternary structure, interacts with eme1. Requires Mg(2+) as cofactor.

The protein resides in the nucleus. Functionally, interacts with eme1 to form a DNA structure-specific endonuclease with substrate preference for branched DNA structures with a 5'-end at the branch nick. Typical substrates include 3'-flap structures, D-loops, replication forks and nicked Holliday junctions. May be required in mitosis for the processing of stalled or collapsed replication fork intermediates. May be required in meiosis for the repair of meiosis-specific double strand breaks subsequent to single-end invasion (SEI). The chain is Crossover junction endonuclease mus81 (mus81) from Aspergillus fumigatus (strain ATCC MYA-4609 / CBS 101355 / FGSC A1100 / Af293) (Neosartorya fumigata).